A 660-amino-acid chain; its full sequence is Bifunctional polymyxin resistance protein ArnA (660 aa).

The tract at residues 1–304 (MKAVIFAYHD…TLGLVAGARL (304 aa)) is formyltransferase ArnAFT. H104 functions as the Proton donor; for formyltransferase activity in the catalytic mechanism. (6R)-10-formyltetrahydrofolate is bound by residues R114 and 136-140 (VKRAD). A dehydrogenase ArnADH region spans residues 314 to 660 (RRIRVLILGV…RSVDIAERAS (347 aa)). Residues D347 and 368–369 (DI) contribute to the NAD(+) site. UDP-alpha-D-glucuronate contacts are provided by residues A393, Y398, and 432-433 (TS). The Proton acceptor; for decarboxylase activity role is filled by E434. UDP-alpha-D-glucuronate-binding positions include R460, N492, 526–535 (KLIDGGQQKR), and Y613. R619 (proton donor; for decarboxylase activity) is an active-site residue.

It in the N-terminal section; belongs to the Fmt family. UDP-L-Ara4N formyltransferase subfamily. This sequence in the C-terminal section; belongs to the NAD(P)-dependent epimerase/dehydratase family. UDP-glucuronic acid decarboxylase subfamily. Homohexamer, formed by a dimer of trimers.

It catalyses the reaction UDP-alpha-D-glucuronate + NAD(+) = UDP-beta-L-threo-pentopyranos-4-ulose + CO2 + NADH. The enzyme catalyses UDP-4-amino-4-deoxy-beta-L-arabinose + (6R)-10-formyltetrahydrofolate = UDP-4-deoxy-4-formamido-beta-L-arabinose + (6S)-5,6,7,8-tetrahydrofolate + H(+). It functions in the pathway nucleotide-sugar biosynthesis; UDP-4-deoxy-4-formamido-beta-L-arabinose biosynthesis; UDP-4-deoxy-4-formamido-beta-L-arabinose from UDP-alpha-D-glucuronate: step 1/3. Its pathway is nucleotide-sugar biosynthesis; UDP-4-deoxy-4-formamido-beta-L-arabinose biosynthesis; UDP-4-deoxy-4-formamido-beta-L-arabinose from UDP-alpha-D-glucuronate: step 3/3. It participates in bacterial outer membrane biogenesis; lipopolysaccharide biosynthesis. Its function is as follows. Bifunctional enzyme that catalyzes the oxidative decarboxylation of UDP-glucuronic acid (UDP-GlcUA) to UDP-4-keto-arabinose (UDP-Ara4O) and the addition of a formyl group to UDP-4-amino-4-deoxy-L-arabinose (UDP-L-Ara4N) to form UDP-L-4-formamido-arabinose (UDP-L-Ara4FN). The modified arabinose is attached to lipid A and is required for resistance to polymyxin and cationic antimicrobial peptides. This is Bifunctional polymyxin resistance protein ArnA from Salmonella schwarzengrund (strain CVM19633).